The sequence spans 1417 residues: MMALGEPYYSSKPDKDFNFGSTMARRQMTPTMVTKLPKFVRNSPQAYDWIVRGLIFPTTGKTYFQRVVVITGGLEDGTYGSYAFNGSEWVEIYPIEHLNLMSSLKLIHKANALQERLRLSQEEKATLALDVQFLQHENVRLKELIPKPEPRKIQMKWIIVGAVLTFLSLIPGGYAQSQTNNTIFTDMIAACKYSTETLTENLDLRIKLALANITINDKLDAVRQILNFAFVPRAHWLRTVFYYIHYYEMWNIFMFVLAIGTVMRSARPGTDLITLATSHLSGFRMAVLPTIPFHTTMTLWVMNTLMVCYYFDNLLAITMAILAPILGIIFLCFMEDSNYVSQIRGLIATAVLIAGGHACLTLTGTTTSLFVVILTCRFIRMATVFIGTRFEIRDANGKVVATVPTRIKNVAFDFFQKLKQSGVRVGVNDFVVIKPGALCIIDTPEGKGTGFFSGNDIVTAAHVVGNNTFVSVCYEGLVYEAKVRYMPEKDIAFITCPGDLHPTARLKLSKNPDYSCVTVMAYVNEDLVVSTATAMVHGNTLSYAVRTQDGMSGAPVCDKYGRVLAVHQTNTGYTGGAVIIDPADFHPVKAPSQVELLKEEIERLKAQLNSAAENPVTVVTQQPIVTLEQKSVSDSDVVDLVRTAMEREMKVLRDEINGILAPFLQKKKGKTKHGRGRVRRNLRKGVKLLTEEEYRELLEKGLDRETFLDLIDRIIGERSGYPDYDDEDYYDEDDDGWGMVGDDVEFDYTEVINFDQAKPTPAPRTTKPKPCPEPKIEAQPLDLSQKKEKQPEHEQQVAKPTKPQKIEPQPYSQTYGKAPIWESYDFDWDEDDAKFILPAPHRLTKADEIVLGSKIVKLRTIIETAIKTQNYSALPEAVFELDKAAYEAGLEGFLQRVKSKKQGPKKLQRAPEDQGAQNYHSLDAWKSLLEPPRERRCVPANFPLLGHLPINRPIFDDKKPRDDLLGLLPEPTWHAFEEYGPTTWGPQAFVKSFDKFFYAEPIDFFSEYPQLCAFADWATYREFRYLEDTRVIHITATEKNTDSTPAYPKMNYFDTEEDYLEAHGWAPYIREFTRVFKGDKPEVLWYLFLKKEIIKEEKIRNSDIRQIVCADPIYTRIGACLEAHQNALMKQHTDTSVGQCGWSPMEGGFKKTMQRLVNKGNKHFIEFDWTRYDGTIPPALFKHIKEIRWNFINKDQREKYRHVHEWYVDNLLNRHVLLPSGEVTLQTRGNPSGQFSTPMDNNMVNFWLQAFEFAYFNGPDKDLWKTYDTVVYGDDRLSTTPSVPDNYEERVITMYRDIFGMWVKPGKVICRDSIVGLSFCGFTVNENLEPVPTSPEKLMASLLKPYKILPDLESLHGKLLCYQLLAAFMAEDHPFKVYVEHCLSRTAKQLRDSGLPARLTEEQLHRIWRGGPKKCDG.

Positions K105–E143 form a coiled coil. The next 5 membrane-spanning stretches (helical) occupy residues M155–A175, V240–G260, V287–V307, L314–M334, and G345–T365. Catalysis depends on charge relay system; for serine protease activity residues H462, D490, and S552. Residues V588–P615 are a coiled coil. Y694 is modified (O-(5'-phospho-RNA)-tyrosine). The interval N753–Q813 is disordered. A compositionally biased stretch (basic and acidic residues) spans S784–Q796. A RdRp catalytic domain is found at K1162–E1288.

It belongs to the astroviridae polyprotein 1AB family. As to quaternary structure, monomer. Post-translationally, cleaved by the viral and host proteases. The protease is probably autocatalytically cleaved.

Its subcellular location is the host membrane. It catalyses the reaction RNA(n) + a ribonucleoside 5'-triphosphate = RNA(n+1) + diphosphate. Responsible for the cleavage of the polyprotein into functional products. In terms of biological role, protein covalently attached to the 5' extremity of the genomic and subgenomic RNAs. It may serve as a primer for the replicase. This Human astrovirus-8 (HAstV-8) protein is Non-structural polyprotein 1AB (ORF1).